The chain runs to 447 residues: Multicopper oxidase mco (447 aa).

Over residues 1-25 (MMNMKEDKKNTMDMTNMKHHDERKK) the composition is skewed to basic and acidic residues. Residues 1–29 (MMNMKEDKKNTMDMTNMKHHDERKKLNSS) form a disordered region. 12 residues coordinate Cu cation: histidine 107, histidine 109, histidine 147, histidine 149, histidine 375, histidine 378, histidine 380, histidine 428, cysteine 429, histidine 430, histidine 434, and methionine 439.

It belongs to the multicopper oxidase family. Cu cation serves as cofactor.

The protein localises to the cytoplasm. May be involved in copper homeostasis and oxidative stress response. The protein is Multicopper oxidase mco (mco) of Staphylococcus haemolyticus (strain JCSC1435).